A 283-amino-acid polypeptide reads, in one-letter code: Bifunctional protein FolD 2 (283 aa).

NADP(+)-binding positions include G165 to G167, T192, and V233.

The protein belongs to the tetrahydrofolate dehydrogenase/cyclohydrolase family. As to quaternary structure, homodimer.

The catalysed reaction is (6R)-5,10-methylene-5,6,7,8-tetrahydrofolate + NADP(+) = (6R)-5,10-methenyltetrahydrofolate + NADPH. It catalyses the reaction (6R)-5,10-methenyltetrahydrofolate + H2O = (6R)-10-formyltetrahydrofolate + H(+). It participates in one-carbon metabolism; tetrahydrofolate interconversion. In terms of biological role, catalyzes the oxidation of 5,10-methylenetetrahydrofolate to 5,10-methenyltetrahydrofolate and then the hydrolysis of 5,10-methenyltetrahydrofolate to 10-formyltetrahydrofolate. The sequence is that of Bifunctional protein FolD 2 from Nocardioides sp. (strain ATCC BAA-499 / JS614).